Consider the following 507-residue polypeptide: Nuclear poly(A) polymerase 3 (507 aa).

Residues 79-81 (YGS), 91-94 (SDID), D147, K208, Y217, and 226-227 (GV) each bind ATP. D92, D94, and D147 together coordinate Mg(2+).

It belongs to the poly(A) polymerase family. In terms of assembly, monomer. Forms a complex with cleavage and polyadenylation specificity factor (CPSF) subunits FIPS5 and CPSF30. Requires Mg(2+) as cofactor. Mn(2+) is required as a cofactor. Expressed in leaves (mostly in petioles and tips), cotyledon, roots (tips, vascular tissue of the radicle, and throughout the root tissue excluding the elongation zone), stems, and flowers (restricted to the stigma and the pollen in mature anthers). Active in the primary and secondary root systems.

It localises to the nucleus. The catalysed reaction is RNA(n) + ATP = RNA(n)-3'-adenine ribonucleotide + diphosphate. Essential protein. Polymerase that creates the 3'-poly(A) tail of mRNA's. Also required for the endoribonucleolytic cleavage reaction at some polyadenylation sites. May acquire specificity through interaction with a cleavage and polyadenylation specificity factor (CPSF) at its C-terminus. The polypeptide is Nuclear poly(A) polymerase 3 (Arabidopsis thaliana (Mouse-ear cress)).